Consider the following 1219-residue polypeptide: ATP-dependent helicase/nuclease subunit A (1219 aa).

One can recognise a UvrD-like helicase ATP-binding domain in the interval 12–477 (TRWTDNQWKS…IDLSQNFRSR (466 aa)). 33-40 (AAAGSGKT) lines the ATP pocket. In terms of domain architecture, UvrD-like helicase C-terminal spans 478–786 (EEVLTTTNYL…RMMTIHSSKG (309 aa)). Residues 997-1016 (PSKQSVSELKRQHETEQSDT) are disordered. Basic and acidic residues predominate over residues 1004–1016 (ELKRQHETEQSDT).

The protein belongs to the helicase family. AddA subfamily. As to quaternary structure, heterodimer of AddA and AddB/RexB. Requires Mg(2+) as cofactor.

The enzyme catalyses Couples ATP hydrolysis with the unwinding of duplex DNA by translocating in the 3'-5' direction.. It catalyses the reaction ATP + H2O = ADP + phosphate + H(+). Functionally, the heterodimer acts as both an ATP-dependent DNA helicase and an ATP-dependent, dual-direction single-stranded exonuclease. Recognizes the chi site generating a DNA molecule suitable for the initiation of homologous recombination. The AddA nuclease domain is required for chi fragment generation; this subunit has the helicase and 3' -&gt; 5' nuclease activities. In Staphylococcus saprophyticus subsp. saprophyticus (strain ATCC 15305 / DSM 20229 / NCIMB 8711 / NCTC 7292 / S-41), this protein is ATP-dependent helicase/nuclease subunit A.